The following is a 284-amino-acid chain: Bifunctional protein FolD (284 aa).

NADP(+) contacts are provided by residues 165–167 (GRS) and Ser-190.

Belongs to the tetrahydrofolate dehydrogenase/cyclohydrolase family. In terms of assembly, homodimer.

The enzyme catalyses (6R)-5,10-methylene-5,6,7,8-tetrahydrofolate + NADP(+) = (6R)-5,10-methenyltetrahydrofolate + NADPH. It carries out the reaction (6R)-5,10-methenyltetrahydrofolate + H2O = (6R)-10-formyltetrahydrofolate + H(+). It functions in the pathway one-carbon metabolism; tetrahydrofolate interconversion. Its function is as follows. Catalyzes the oxidation of 5,10-methylenetetrahydrofolate to 5,10-methenyltetrahydrofolate and then the hydrolysis of 5,10-methenyltetrahydrofolate to 10-formyltetrahydrofolate. This Streptococcus equi subsp. zooepidemicus (strain MGCS10565) protein is Bifunctional protein FolD.